The following is a 214-amino-acid chain: Glutathione S-transferase F11 (214 aa).

Residues 2 to 82 form the GST N-terminal domain; it reads VVKVYGQIKA…YYATKYADQG (81 aa). Residues 11–12, 40–41, 53–54, and 66–67 each bind glutathione; these read AA, QK, QV, and ES. In terms of domain architecture, GST C-terminal spans 89 to 214; the sequence is TLEGRAIVDQ…WKKLMELAAY (126 aa).

The protein belongs to the GST superfamily. Phi family.

It localises to the cytoplasm. The protein resides in the cytosol. The enzyme catalyses RX + glutathione = an S-substituted glutathione + a halide anion + H(+). Its function is as follows. May be involved in the conjugation of reduced glutathione to a wide number of exogenous and endogenous hydrophobic electrophiles and have a detoxification role against certain herbicides. This is Glutathione S-transferase F11 from Arabidopsis thaliana (Mouse-ear cress).